The sequence spans 118 residues: Large ribosomal subunit protein bL20 (118 aa).

It belongs to the bacterial ribosomal protein bL20 family.

Functionally, binds directly to 23S ribosomal RNA and is necessary for the in vitro assembly process of the 50S ribosomal subunit. It is not involved in the protein synthesizing functions of that subunit. The chain is Large ribosomal subunit protein bL20 from Thermotoga neapolitana (strain ATCC 49049 / DSM 4359 / NBRC 107923 / NS-E).